A 350-amino-acid chain; its full sequence is RNA 3'-terminal phosphate cyclase (350 aa).

ATP contacts are provided by residues Q107 and 290 to 294 (FLGDQ). H316 (tele-AMP-histidine intermediate) is an active-site residue.

The protein belongs to the RNA 3'-terminal cyclase family. Type 1 subfamily.

The protein localises to the cytoplasm. The catalysed reaction is a 3'-end 3'-phospho-ribonucleotide-RNA + ATP = a 3'-end 2',3'-cyclophospho-ribonucleotide-RNA + AMP + diphosphate. Its function is as follows. Catalyzes the conversion of 3'-phosphate to a 2',3'-cyclic phosphodiester at the end of RNA. The mechanism of action of the enzyme occurs in 3 steps: (A) adenylation of the enzyme by ATP; (B) transfer of adenylate to an RNA-N3'P to produce RNA-N3'PP5'A; (C) and attack of the adjacent 2'-hydroxyl on the 3'-phosphorus in the diester linkage to produce the cyclic end product. The biological role of this enzyme is unknown but it is likely to function in some aspects of cellular RNA processing. The chain is RNA 3'-terminal phosphate cyclase from Gloeothece citriformis (strain PCC 7424) (Cyanothece sp. (strain PCC 7424)).